Here is a 184-residue protein sequence, read N- to C-terminus: Elongation factor P 1 (184 aa).

The protein belongs to the elongation factor P family.

It localises to the cytoplasm. Its pathway is protein biosynthesis; polypeptide chain elongation. Its function is as follows. Involved in peptide bond synthesis. Stimulates efficient translation and peptide-bond synthesis on native or reconstituted 70S ribosomes in vitro. Probably functions indirectly by altering the affinity of the ribosome for aminoacyl-tRNA, thus increasing their reactivity as acceptors for peptidyl transferase. The sequence is that of Elongation factor P 1 (efp1) from Protochlamydia amoebophila (strain UWE25).